The following is a 286-amino-acid chain: Putative S-adenosyl-L-methionine-dependent methyltransferase FRAAL3718 (286 aa).

S-adenosyl-L-methionine contacts are provided by residues D122 and 151-152 (DL).

Belongs to the UPF0677 family.

Exhibits S-adenosyl-L-methionine-dependent methyltransferase activity. The sequence is that of Putative S-adenosyl-L-methionine-dependent methyltransferase FRAAL3718 from Frankia alni (strain DSM 45986 / CECT 9034 / ACN14a).